The primary structure comprises 807 residues: SWI/SNF complex subunit SWI3C (807 aa).

Residues 1–74 (MPASEDRRGK…DPGLGIGEVV (74 aa)) are disordered. The segment covering 28–54 (EEEDMEEEDEENNNNNNEEMDDVENAD) has biased composition (acidic residues). The region spanning 176–274 (HVLPMHSDWF…YCATAQSHPG (99 aa)) is the SWIRM domain. The segment at 340 to 394 (LCDSHCNHCSRPLPTVYFQSQKKGDILLCCDCFHHGRFVVGHSCLDFVRVDPMKF) adopts a ZZ-type; degenerate zinc-finger fold. Zn(2+) contacts are provided by C345, C348, C368, and C371. The 52-residue stretch at 398-449 (QDGDNWTDQETLLLLEAVELYNENWVQIADHVGSKSKAQCILHFLRLPVEDG) folds into the SANT domain. 2 stretches are compositionally biased toward polar residues: residues 458 to 467 (GVTNTENPTN) and 552 to 569 (ENQQ…NGAE). 2 disordered regions span residues 458–487 (GVTN…SEQG) and 549–571 (LDGE…AEAQ). The stretch at 598–656 (ADHEEREIQRLSANIVNHQLKRMELKLKQFAEIETLLMKECEQVEKTRQRFSAERARML) forms a coiled coil. Low complexity-rich tracts occupy residues 692–703 (QHQQQQASATSQ) and 726–739 (QQQQ…QQQQ). 3 disordered regions span residues 692–713 (QHQQ…FSNN), 721–740 (HFMA…QQQA), and 781–807 (SINQ…LGLN). Residues 798-807 (SGSGSGLGLN) show a composition bias toward gly residues.

Heterodimer. Interacts with SWI3A, SWI3B and BRM, but not with BSH. Interacts with MORC6 and SUVH9. As to expression, expressed in roots, stems, leaves, flowers and siliques.

It is found in the nucleus. Component of a multiprotein complex equivalent of the SWI/SNF complex, an ATP-dependent chromatin-remodeling complex, which is required for the positive and negative regulation of gene expression of a large number of genes. It changes chromatin structure by altering DNA-histone contacts within a nucleosome, leading eventually to a change in nucleosome position, thus facilitating or repressing binding of gene-specific transcription factors. The chain is SWI/SNF complex subunit SWI3C (SWI3C) from Arabidopsis thaliana (Mouse-ear cress).